A 509-amino-acid polypeptide reads, in one-letter code: Bifunctional purine biosynthesis protein PurH (509 aa).

Residues 1–145 (MIKRALISVF…KSFKDVVVIS (145 aa)) form the MGS-like domain.

This sequence belongs to the PurH family.

It carries out the reaction (6R)-10-formyltetrahydrofolate + 5-amino-1-(5-phospho-beta-D-ribosyl)imidazole-4-carboxamide = 5-formamido-1-(5-phospho-D-ribosyl)imidazole-4-carboxamide + (6S)-5,6,7,8-tetrahydrofolate. The catalysed reaction is IMP + H2O = 5-formamido-1-(5-phospho-D-ribosyl)imidazole-4-carboxamide. It functions in the pathway purine metabolism; IMP biosynthesis via de novo pathway; 5-formamido-1-(5-phospho-D-ribosyl)imidazole-4-carboxamide from 5-amino-1-(5-phospho-D-ribosyl)imidazole-4-carboxamide (10-formyl THF route): step 1/1. It participates in purine metabolism; IMP biosynthesis via de novo pathway; IMP from 5-formamido-1-(5-phospho-D-ribosyl)imidazole-4-carboxamide: step 1/1. The chain is Bifunctional purine biosynthesis protein PurH from Brachyspira hyodysenteriae (strain ATCC 49526 / WA1).